The primary structure comprises 451 residues: Trigger factor (451 aa).

A PPIase FKBP-type domain is found at 171-256; sequence GDRVKVNFKG…ATAIEAPEDK (86 aa).

Belongs to the FKBP-type PPIase family. Tig subfamily.

It localises to the cytoplasm. It carries out the reaction [protein]-peptidylproline (omega=180) = [protein]-peptidylproline (omega=0). Functionally, involved in protein export. Acts as a chaperone by maintaining the newly synthesized protein in an open conformation. Functions as a peptidyl-prolyl cis-trans isomerase. This chain is Trigger factor, found in Bradyrhizobium sp. (strain ORS 278).